Reading from the N-terminus, the 152-residue chain is MTHIIIDGDACPVVDSIIDLTTETGIFVTIIRSFSHFSNQLYPPHVSTLYVDDGPDAVDYKIVQLSTKDDIVITQDYGLASLLVDKVLIVMHHNGKIYNSKNIQQLLDKRYMNAQIRKQGGRHKGPPPFTKQDQKVFEKSLLRVIHRIKELD.

This sequence belongs to the UPF0178 family.

In Staphylococcus aureus (strain MRSA252), this protein is UPF0178 protein SAR0734.